The following is a 555-amino-acid chain: Dihydroxy-acid dehydratase (555 aa).

Residue Asp-78 coordinates Mg(2+). [2Fe-2S] cluster is bound at residue Cys-119. Mg(2+) contacts are provided by Asp-120 and Lys-121. Lys-121 carries the N6-carboxylysine modification. Cys-195 provides a ligand contact to [2Fe-2S] cluster. Residue Glu-444 participates in Mg(2+) binding. Ser-470 serves as the catalytic Proton acceptor.

Belongs to the IlvD/Edd family. Homodimer. [2Fe-2S] cluster is required as a cofactor. The cofactor is Mg(2+).

It carries out the reaction (2R)-2,3-dihydroxy-3-methylbutanoate = 3-methyl-2-oxobutanoate + H2O. The enzyme catalyses (2R,3R)-2,3-dihydroxy-3-methylpentanoate = (S)-3-methyl-2-oxopentanoate + H2O. Its pathway is amino-acid biosynthesis; L-isoleucine biosynthesis; L-isoleucine from 2-oxobutanoate: step 3/4. It functions in the pathway amino-acid biosynthesis; L-valine biosynthesis; L-valine from pyruvate: step 3/4. In terms of biological role, functions in the biosynthesis of branched-chain amino acids. Catalyzes the dehydration of (2R,3R)-2,3-dihydroxy-3-methylpentanoate (2,3-dihydroxy-3-methylvalerate) into 2-oxo-3-methylpentanoate (2-oxo-3-methylvalerate) and of (2R)-2,3-dihydroxy-3-methylbutanoate (2,3-dihydroxyisovalerate) into 2-oxo-3-methylbutanoate (2-oxoisovalerate), the penultimate precursor to L-isoleucine and L-valine, respectively. This Dehalococcoides mccartyi (strain ATCC BAA-2266 / KCTC 15142 / 195) (Dehalococcoides ethenogenes (strain 195)) protein is Dihydroxy-acid dehydratase.